Here is a 226-residue protein sequence, read N- to C-terminus: DNA mismatch repair protein MutH (226 aa).

It belongs to the MutH family.

The protein resides in the cytoplasm. Its function is as follows. Sequence-specific endonuclease that cleaves unmethylated GATC sequences. It is involved in DNA mismatch repair. The polypeptide is DNA mismatch repair protein MutH (Vibrio campbellii (strain ATCC BAA-1116)).